The chain runs to 908 residues: 5'-3' exoribonuclease 2 homolog (908 aa).

Residues 263-280 (RPCDICNGFGHEMDKCVG) form a CCHC-type zinc finger. Disordered regions lie at residues 409–457 (RQRR…VGNY) and 821–908 (GGNQ…YRRF). The segment covering 432 to 454 (HGSLNQSAFGASAVGPNSQQRSV) has biased composition (polar residues). A Phosphoserine modification is found at Ser-438. Composition is skewed to low complexity over residues 825-868 (GQSY…HNQR) and 878-908 (QRNF…YRRF).

The protein belongs to the 5'-3' exonuclease family. XRN2/RAT1 subfamily. As to quaternary structure, interacts with cuff and Rai1; the interaction with cuff may inhibit its role in RNA degradation.

Its subcellular location is the nucleus. A 5'-3' exoribonuclease. May promote the termination of transcription by RNA polymerase II and promote RNA degradation. Involved in turnover of piRNA precursors. The protein is 5'-3' exoribonuclease 2 homolog of Drosophila melanogaster (Fruit fly).